We begin with the raw amino-acid sequence, 459 residues long: Putrescine aminotransferase (459 aa).

Pyridoxal 5'-phosphate contacts are provided by residues 150–151 (GT) and Q274. N6-(pyridoxal phosphate)lysine is present on K300. A pyridoxal 5'-phosphate-binding site is contributed by T332.

This sequence belongs to the class-III pyridoxal-phosphate-dependent aminotransferase family. Putrescine aminotransferase subfamily. Requires pyridoxal 5'-phosphate as cofactor.

The enzyme catalyses an alkane-alpha,omega-diamine + 2-oxoglutarate = an omega-aminoaldehyde + L-glutamate. The catalysed reaction is putrescine + 2-oxoglutarate = 1-pyrroline + L-glutamate + H2O. It carries out the reaction cadaverine + 2-oxoglutarate = 5-aminopentanal + L-glutamate. It functions in the pathway amine and polyamine degradation; putrescine degradation; 4-aminobutanal from putrescine (transaminase route): step 1/1. Functionally, catalyzes the aminotransferase reaction from putrescine to 2-oxoglutarate, leading to glutamate and 4-aminobutanal, which spontaneously cyclizes to form 1-pyrroline. This is the first step in one of two pathways for putrescine degradation, where putrescine is converted into 4-aminobutanoate (gamma-aminobutyrate or GABA) via 4-aminobutanal. Also functions as a cadaverine transaminase in a a L-lysine degradation pathway to succinate that proceeds via cadaverine, glutarate and L-2-hydroxyglutarate. The protein is Putrescine aminotransferase of Shigella flexneri serotype 5b (strain 8401).